The following is a 142-amino-acid chain: uncharacterized protein (142 aa).

Helical transmembrane passes span V75–A97 and L107–Y124.

The protein resides in the cell membrane. This is an uncharacterized protein from Archaeoglobus fulgidus (strain ATCC 49558 / DSM 4304 / JCM 9628 / NBRC 100126 / VC-16).